Consider the following 398-residue polypeptide: Serine/threonine-protein phosphatase 2A activator (398 aa).

Arg137, Thr142, and Gly143 together coordinate ATP. Mg(2+) is bound by residues Gly197 and Asp203. ATP is bound by residues Pro293, Gln296, and His297. A compositionally biased stretch (pro residues) spans 343 to 352; sequence PVATAPPPPA. Positions 343-398 are disordered; sequence PVATAPPPPAESLSIEQNVGDSSSESSDNSVVLRPSTSSSSLVAAAEGSGDKPSKE. A compositionally biased stretch (low complexity) spans 363-388; sequence DSSSESSDNSVVLRPSTSSSSLVAAA.

This sequence belongs to the PTPA-type PPIase family. As to quaternary structure, associates with PP2A heterodimeric core enzyme PP2A(D), composed of a catalytic subunit (subunit C) and a constant regulatory subunit (PR65 or subunit A). Interacts with the catalytic subunit Pp4-19C of the serine/threonine-protein phosphatase 4 (PP4) complex; thereby mediating basal localization of the Miranda (Mira) complex; probably by facilitating the dephosphorylation of Mira.

The protein localises to the cytoplasm. Its subcellular location is the nucleus. It carries out the reaction [protein]-peptidylproline (omega=180) = [protein]-peptidylproline (omega=0). Its function is as follows. PPIases accelerate the folding of proteins. It catalyzes the cis-trans isomerization of proline imidic peptide bonds in oligopeptides. Acts as a regulatory subunit for serine/threonine-protein phosphatase 2A (PP2A). Modulates PP2A activity or substrate specificity, probably by inducing a conformational change in the catalytic subunit, a proposed direct target of the PPIase. Acts as mediator for the basal localization of the Miranda (Mira) complex during mitosis of larval neuroblast asymmetric division. Associates with the phosphatase 4 (PP4) complex to mediate basal localization of Mira; probably by facilitating the dephosphorylation of Mira. Cortical association of Mira mediated by the PTPA-PP4 complex seems to be independent of aPKC activity. This is Serine/threonine-protein phosphatase 2A activator from Drosophila melanogaster (Fruit fly).